The sequence spans 1330 residues: Nephrocystin-3 (1330 aa).

Gly-2 carries the N-myristoyl glycine lipid modification. Positions 83–207 (ELEYAAAEYE…QRLQAQGIQV (125 aa)) form a coiled coil. TPR repeat units lie at residues 471 to 504 (IPEE…AHEL), 885 to 918 (CLLN…KSAM), 920 to 942 (TEYF…MSCL), 943 to 976 (ADLY…RETA), 985 to 1018 (AQSL…SENA), 1027 to 1060 (AREL…HQKA), 1093 to 1126 (ARTL…RERV), 1135 to 1168 (AQSL…RRRA), 1177 to 1210 (AYTV…RQKS), 1219 to 1252 (ATAL…YEDS), and 1261 to 1294 (GETL…KEAE). A disordered region spans residues 1296 to 1330 (SLLGGKAPSRHSSSGDTFSLKTAHSPNVFLQQGQR). Over residues 1305 to 1330 (RHSSSGDTFSLKTAHSPNVFLQQGQR) the composition is skewed to polar residues.

In terms of assembly, interacts with NPHP1 and INVS/NPHP2. Interacts (when myristoylated) with UNC119 and UNC119B; interaction is required for localization to cilium. Interacts with CEP164. Component of a complex containing at least ANKS6, INVS, NEK8 and NPHP3. ANKS6 may organize complex assembly by linking INVS and NPHP3 to NEK8 and INVS may target the complex to the proximal ciliary axoneme. In terms of tissue distribution, widely expressed at low level. Expressed in heart, placenta, liver, skeletal muscle, kidney and pancreas. Expressed at very low level in brain and lung.

It is found in the cell projection. Its subcellular location is the cilium. Functionally, required for normal ciliary development and function. Inhibits disheveled-1-induced canonical Wnt-signaling activity and may also play a role in the control of non-canonical Wnt signaling which regulates planar cell polarity. Probably acts as a molecular switch between different Wnt signaling pathways. Required for proper convergent extension cell movements. The sequence is that of Nephrocystin-3 (NPHP3) from Homo sapiens (Human).